The primary structure comprises 348 residues: Mannonate dehydratase (348 aa).

Belongs to the mannonate dehydratase family. It depends on Fe(2+) as a cofactor. Requires Mn(2+) as cofactor.

The enzyme catalyses D-mannonate = 2-dehydro-3-deoxy-D-gluconate + H2O. It participates in carbohydrate metabolism; pentose and glucuronate interconversion. Functionally, catalyzes the dehydration of D-mannonate. This Streptococcus agalactiae serotype III (strain NEM316) protein is Mannonate dehydratase.